Reading from the N-terminus, the 490-residue chain is Cytochrome P450 2W1 (490 aa).

A signal peptide spans 1 to 22; sequence MALLLLLFLGLLGLWGLLCACA. Asparagine 177 is a glycosylation site (N-linked (GlcNAc...) asparagine). Position 433 (cysteine 433) interacts with heme.

This sequence belongs to the cytochrome P450 family. The cofactor is heme. In terms of tissue distribution, very low levels are detected in fetal and adult tissues. Highly expressed in several tumor samples, in particular colon and adrenal tumors.

The protein localises to the endoplasmic reticulum lumen. It localises to the cell membrane. It is found in the microsome membrane. It carries out the reaction all-trans-retinoate + reduced [NADPH--hemoprotein reductase] + O2 = all-trans-4-hydroxyretinoate + oxidized [NADPH--hemoprotein reductase] + H2O + H(+). The enzyme catalyses 1-(9Z-octadecenoyl)-sn-glycero-3-phosphocholine + reduced [NADPH--hemoprotein reductase] + O2 = 1-[8-hydroxy-(9Z)-octadecenoyl]-sn-glycero-3-phosphocholine + oxidized [NADPH--hemoprotein reductase] + H2O + H(+). The catalysed reaction is 1-(9Z-octadecenoyl)-sn-glycero-3-phosphocholine + reduced [NADPH--hemoprotein reductase] + O2 = 1-[11-hydroxy-(9Z)-octadecenoyl]-sn-glycero-3-phosphocholine + oxidized [NADPH--hemoprotein reductase] + H2O + H(+). It catalyses the reaction 1-(9Z-octadecenoyl)-sn-glycero-3-phosphocholine + reduced [NADPH--hemoprotein reductase] + O2 = 1-[(9S,10R)-epoxy-octadecanoyl]-sn-glycero-3-phosphocholine + oxidized [NADPH--hemoprotein reductase] + H2O + H(+). It carries out the reaction 1-(9Z-octadecenoyl)-sn-glycero-3-phosphocholine + reduced [NADPH--hemoprotein reductase] + O2 = 1-[(9R,10S)-epoxy-octadecanoyl]-sn-glycero-3-phosphocholine + oxidized [NADPH--hemoprotein reductase] + H2O + H(+). Its function is as follows. A cytochrome P450 monooxygenase that may play a role in retinoid and phospholipid metabolism. Catalyzes the hydroxylation of saturated carbon hydrogen bonds. Hydroxylates all trans-retinoic acid (atRA) to 4-hydroxyretinoate and may regulate atRA clearance. Other retinoids such as all-trans retinol and all-trans retinal are potential endogenous substrates. Catalyzes both epoxidation of double bonds and hydroxylation of carbon hydrogen bonds of the fatty acyl chain of 1-acylphospholipids/2-lysophospholipids. Can metabolize various lysophospholipids classes including lysophosphatidylcholines (LPCs), lysophosphatidylinositols (LPIs), lysophosphatidylserines (LPSs), lysophosphatidylglycerols (LPGs), lysophosphatidylethanolamines (LPEs) and lysophosphatidic acids (LPAs). Has low or no activity toward 2-acylphospholipids/1-lysophospholipids, diacylphospholipids and free fatty acids. May play a role in tumorigenesis by activating procarcinogens such as aflatoxin B1, polycyclic aromatic hydrocarbon dihydrodiols and aromatic amines. Mechanistically, uses molecular oxygen inserting one oxygen atom into a substrate, and reducing the second into a water molecule, with two electrons provided by NADPH via cytochrome P450 reductase (CPR; NADPH-ferrihemoprotein reductase). The chain is Cytochrome P450 2W1 from Homo sapiens (Human).